The following is a 264-amino-acid chain: Thymidylate synthase (264 aa).

Position 21 (arginine 21) interacts with dUMP. (6R)-5,10-methylene-5,6,7,8-tetrahydrofolate is bound at residue histidine 51. 126 to 127 (RR) contacts dUMP. The active-site Nucleophile is the cysteine 146. DUMP contacts are provided by residues 166–169 (RSCD), asparagine 177, and 207–209 (HLY). Residue aspartate 169 coordinates (6R)-5,10-methylene-5,6,7,8-tetrahydrofolate. Residue alanine 263 participates in (6R)-5,10-methylene-5,6,7,8-tetrahydrofolate binding.

The protein belongs to the thymidylate synthase family. Bacterial-type ThyA subfamily. As to quaternary structure, homodimer.

Its subcellular location is the cytoplasm. The enzyme catalyses dUMP + (6R)-5,10-methylene-5,6,7,8-tetrahydrofolate = 7,8-dihydrofolate + dTMP. Its pathway is pyrimidine metabolism; dTTP biosynthesis. In terms of biological role, catalyzes the reductive methylation of 2'-deoxyuridine-5'-monophosphate (dUMP) to 2'-deoxythymidine-5'-monophosphate (dTMP) while utilizing 5,10-methylenetetrahydrofolate (mTHF) as the methyl donor and reductant in the reaction, yielding dihydrofolate (DHF) as a by-product. This enzymatic reaction provides an intracellular de novo source of dTMP, an essential precursor for DNA biosynthesis. This is Thymidylate synthase from Klebsiella pneumoniae subsp. pneumoniae (strain ATCC 700721 / MGH 78578).